The following is a 301-amino-acid chain: Protoheme IX farnesyltransferase (301 aa).

Helical transmembrane passes span 34-54, 55-75, 102-121, 125-144, 152-172, 181-201, 222-242, 247-267, and 280-300; these read LVVF…HPLI, GLVS…FNMW, AWEC…AIAV, SALL…TMLL, IVIG…SVSG, LFAI…LLTL, SHIL…GLFV, LYEI…IAVF, and GLFK…IACV.

This sequence belongs to the UbiA prenyltransferase family. Protoheme IX farnesyltransferase subfamily.

The protein resides in the cell inner membrane. The enzyme catalyses heme b + (2E,6E)-farnesyl diphosphate + H2O = Fe(II)-heme o + diphosphate. It functions in the pathway porphyrin-containing compound metabolism; heme O biosynthesis; heme O from protoheme: step 1/1. Converts heme B (protoheme IX) to heme O by substitution of the vinyl group on carbon 2 of heme B porphyrin ring with a hydroxyethyl farnesyl side group. This Anaplasma marginale (strain Florida) protein is Protoheme IX farnesyltransferase.